A 342-amino-acid polypeptide reads, in one-letter code: SWR1-complex protein 5 (342 aa).

3 disordered regions span residues Met-1–Ile-126, Pro-142–Ser-178, and Leu-214–Arg-238. Composition is skewed to acidic residues over residues Leu-8–Phe-20 and Ile-33–Glu-43. Residues Gly-78 to Thr-87 are compositionally biased toward basic residues. In terms of domain architecture, BCNT-C spans Asn-260–Lys-341.

It belongs to the SWC5 family. As to quaternary structure, component of the SWR1 chromatin remodeling complex.

It is found in the nucleus. In terms of biological role, component of the SWR1 complex which mediates the ATP-dependent exchange of histone H2A for the H2A variant H2A.Z leading to transcriptional regulation of selected genes by chromatin remodeling. Involved in chromosome stability. In Neurospora crassa (strain ATCC 24698 / 74-OR23-1A / CBS 708.71 / DSM 1257 / FGSC 987), this protein is SWR1-complex protein 5 (crc-2).